Consider the following 347-residue polypeptide: NADH-ubiquinone oxidoreductase chain 2 (347 aa).

11 consecutive transmembrane segments (helical) span residues 3 to 23, 25 to 45, 59 to 79, 96 to 116, 122 to 142, 149 to 169, 178 to 198, 201 to 221, 237 to 257, 274 to 294, and 323 to 343; these read PPILIIIMSTVILGTMIVMTS, HWMLTWIGFEMNMLAIIPILM, YFLTQATASMLLMMGIIINLL, ILMTTALAMKLGLAPFHFWVP, ISLSSGMILLTWQKIAPLSVL, INPNLLLPMAILSVLIGGWGG, IMAYSSITHMGWMTAILLYNP, MFLNLIIYITMTLSTFMLFMI, APLITSLILTLMLSLGGLPPL, EMIILPTFLAITALLNLYFYM, and MIFLPPLIITSTMLLPLTPMI.

The protein belongs to the complex I subunit 2 family. In terms of assembly, core subunit of respiratory chain NADH dehydrogenase (Complex I) which is composed of 45 different subunits. Interacts with TMEM242.

Its subcellular location is the mitochondrion inner membrane. It catalyses the reaction a ubiquinone + NADH + 5 H(+)(in) = a ubiquinol + NAD(+) + 4 H(+)(out). Core subunit of the mitochondrial membrane respiratory chain NADH dehydrogenase (Complex I) which catalyzes electron transfer from NADH through the respiratory chain, using ubiquinone as an electron acceptor. Essential for the catalytic activity and assembly of complex I. In Civettictis civetta (African civet), this protein is NADH-ubiquinone oxidoreductase chain 2.